Reading from the N-terminus, the 373-residue chain is Erythronate-4-phosphate dehydrogenase (373 aa).

Substrate-binding residues include Ser45 and Thr67. NAD(+) is bound by residues Asp147, 207-209 (ASR), and Asp233. The active site involves Arg209. The active site involves Glu238. Residue His255 is the Proton donor of the active site. Gly258 provides a ligand contact to NAD(+).

It belongs to the D-isomer specific 2-hydroxyacid dehydrogenase family. PdxB subfamily. Homodimer.

The protein resides in the cytoplasm. The catalysed reaction is 4-phospho-D-erythronate + NAD(+) = (R)-3-hydroxy-2-oxo-4-phosphooxybutanoate + NADH + H(+). It functions in the pathway cofactor biosynthesis; pyridoxine 5'-phosphate biosynthesis; pyridoxine 5'-phosphate from D-erythrose 4-phosphate: step 2/5. Catalyzes the oxidation of erythronate-4-phosphate to 3-hydroxy-2-oxo-4-phosphonooxybutanoate. The sequence is that of Erythronate-4-phosphate dehydrogenase from Pseudoalteromonas translucida (strain TAC 125).